Consider the following 297-residue polypeptide: Phosphatidylglycerol--prolipoprotein diacylglyceryl transferase (297 aa).

4 consecutive transmembrane segments (helical) span residues Phe-20 to Ile-40, Ile-58 to Glu-78, Ile-104 to Ile-124, and Ile-133 to Gly-153. Residue Arg-154 coordinates a 1,2-diacyl-sn-glycero-3-phospho-(1'-sn-glycerol). 3 helical membrane-spanning segments follow: residues Thr-194–Tyr-214, Gly-225–Leu-245, and Ala-266–Leu-286.

This sequence belongs to the Lgt family.

The protein resides in the cell inner membrane. It catalyses the reaction L-cysteinyl-[prolipoprotein] + a 1,2-diacyl-sn-glycero-3-phospho-(1'-sn-glycerol) = an S-1,2-diacyl-sn-glyceryl-L-cysteinyl-[prolipoprotein] + sn-glycerol 1-phosphate + H(+). It functions in the pathway protein modification; lipoprotein biosynthesis (diacylglyceryl transfer). Catalyzes the transfer of the diacylglyceryl group from phosphatidylglycerol to the sulfhydryl group of the N-terminal cysteine of a prolipoprotein, the first step in the formation of mature lipoproteins. The protein is Phosphatidylglycerol--prolipoprotein diacylglyceryl transferase of Prochlorococcus marinus subsp. pastoris (strain CCMP1986 / NIES-2087 / MED4).